The chain runs to 465 residues: Cysteine--tRNA ligase (465 aa).

C30 contacts Zn(2+). The short motif at 32–42 (ITVYDYCHVGH) is the 'HIGH' region element. Zn(2+) contacts are provided by C214, H239, and E243. Positions 271-275 (KMSKS) match the 'KMSKS' region motif. K274 contacts ATP.

It belongs to the class-I aminoacyl-tRNA synthetase family. As to quaternary structure, monomer. The cofactor is Zn(2+).

The protein localises to the cytoplasm. It carries out the reaction tRNA(Cys) + L-cysteine + ATP = L-cysteinyl-tRNA(Cys) + AMP + diphosphate. This is Cysteine--tRNA ligase from Burkholderia ambifaria (strain MC40-6).